The chain runs to 155 residues: Cytochrome c-type biogenesis protein CcmE (155 aa).

Residues 1–8 (MNPLRKKR) are Cytoplasmic-facing. A helical; Signal-anchor for type II membrane protein transmembrane segment spans residues 9-29 (LLIIAALLAGVGLAMTLALGA). At 30–155 (LKENINLFYT…GGSSTPAKQG (126 aa)) the chain is on the periplasmic side. Heme contacts are provided by H124 and Y128. The disordered stretch occupies residues 134 to 155 (TKALRDSGQAAPGGSSTPAKQG).

This sequence belongs to the CcmE/CycJ family.

The protein resides in the cell inner membrane. Functionally, heme chaperone required for the biogenesis of c-type cytochromes. Transiently binds heme delivered by CcmC and transfers the heme to apo-cytochromes in a process facilitated by CcmF and CcmH. This chain is Cytochrome c-type biogenesis protein CcmE, found in Pseudomonas savastanoi pv. phaseolicola (strain 1448A / Race 6) (Pseudomonas syringae pv. phaseolicola (strain 1448A / Race 6)).